Here is a 1201-residue protein sequence, read N- to C-terminus: Kinesin-like protein costa (1201 aa).

The Kinesin motor domain occupies 4–391 (PIQVAVRIFP…LQFAFKVQCV (388 aa)). Residues 23 to 92 (SFGPTEPKKD…NGNDSGQKDY (70 aa)) form a disordered region. Basic and acidic residues predominate over residues 28–56 (EPKKDAQAVDEGADSKDSEAQVPAAEKDN). Over residues 57–75 (PSISETDPNGNAEQDSAAD) the composition is skewed to polar residues. An ATP-binding site is contributed by 175 to 182 (GQRGQGKS). Disordered regions lie at residues 502–536 (AEEP…PDLD), 565–606 (HPKA…GASL), and 618–639 (ASQQ…ESSS). A compositionally biased stretch (low complexity) spans 510-521 (SEAANSESPNSD). Phosphoserine occurs at positions 599 and 605. 2 coiled-coil regions span residues 652–821 (AATA…ELVK) and 968–1001 (TKVI…ERVL).

It belongs to the TRAFAC class myosin-kinesin ATPase superfamily. Kinesin family. KIF27 subfamily. In terms of assembly, homodimer (Potential). Binds microtubules. Interacts with ci, smo, sgg, CkIalpha and protein kinase A catalytic subunit. Interacts (via kinesin motor domain) with Ubr3. In terms of processing, polyubiquitinated by Ubr3, which leads to proteasomal degradation.

It is found in the cytoplasm. The protein resides in the cytoskeleton. Regulates cubitus interruptus (ci) processing by recruiting multiple kinases to promote its efficient phosphorylation. Scaffolds multiple kinases and ci into proximity to promote its hyperphosphorylation, which then targets it for SCFSlimb/proteasome-mediated processing to generate its repressor form. Hh signaling inhibits ci phosphorylation by interfering with the cos-ci-kinases complex formation. Negatively regulates hh-signaling pathways during various processes, including photoreceptor differentiation. May negatively regulate a hh-signaling pathway which functions in the intestinal immune response to bacterial uracil by activating the Duox-dependent production of reactive oxygen species (ROS). The protein is Kinesin-like protein costa (cos) of Drosophila melanogaster (Fruit fly).